A 435-amino-acid polypeptide reads, in one-letter code: Probable aminotransferase gliI (435 aa).

The residue at position 266 (Lys-266) is an N6-(pyridoxal phosphate)lysine.

Belongs to the class-I pyridoxal-phosphate-dependent aminotransferase family. The cofactor is pyridoxal 5'-phosphate.

Its pathway is mycotoxin biosynthesis. Probable aminotransferase; part of the gene cluster that mediates the biosynthesis of gliotoxin, a member of the epipolythiodioxopiperazine (ETP) class of toxins characterized by a disulfide bridged cyclic dipeptide. The first step in gliotoxin biosynthesis is the condensation of serine and phenylalanine to form the cyclo-L-phenylalanyl-L-serine diketopiperazine (DKP) by the NRPS gliP. GliP is also able to produce the DKP cyclo-L-tryptophanyl-L-serine, suggesting that the substrate specificity of the first adenylation (A) domain in gliP is sufficiently relaxed to accommodate both L-Phe and L-Trp. The cytochrome P450 monooxygenase gliC has been shown to catalyze the subsequent hydroxylation of the alpha-carbon of L-Phe in cyclo-L-phenylalanyl-L-serine whereas the second cytochrome P450 enzyme, gliF, is presumably involved in the modification of the DKP side chain. The glutathione S-transferase (GST) gliG then forms a bis-glutathionylated biosynthetic intermediate which is responsible for the sulfurization of gliotoxin. This bis-glutathionylated intermediate is subsequently processed by the gamma-glutamyl cyclotransferase gliK to remove both gamma-glutamyl moieties. Subsequent processing via gliI yields a biosynthetic intermediate, which is N-methylated via the N-methyltransferase gliN, before the gliotoxin oxidoreductase gliT-mediated disulfide bridge closure. GliN-mediated amide methylation confers stability to ETP, damping the spontaneous formation of tri- and tetrasulfides. Intracellular dithiol gliotoxin oxidized by gliT is subsequently effluxed by gliA. Gliotoxin contributes to pathogenesis during invasive aspergillosis. In macrophages and neutrophils, gliotoxin showed inhibition of various different cell functions including cytokine production, antigen presentation, phagocytosis, and production of reactive oxygen species. The polypeptide is Probable aminotransferase gliI (Aspergillus fumigatus (strain ATCC MYA-4609 / CBS 101355 / FGSC A1100 / Af293) (Neosartorya fumigata)).